The following is a 43-amino-acid chain: Potassium channel toxin gamma-KTx 4.4 (43 aa).

4 disulfides stabilise this stretch: Cys-5–Cys-23, Cys-11–Cys-34, Cys-20–Cys-39, and Cys-24–Cys-41.

This sequence belongs to the ergtoxin family. Gamma-KTx 4 subfamily. As to expression, expressed by the venom gland.

The protein resides in the secreted. Reversibly blocks Kv11/ERG potassium channels. The sequence is that of Potassium channel toxin gamma-KTx 4.4 from Centruroides exilicauda (Bark scorpion).